The primary structure comprises 355 residues: UDP-3-O-acylglucosamine N-acyltransferase (355 aa).

Histidine 252 serves as the catalytic Proton acceptor.

The protein belongs to the transferase hexapeptide repeat family. LpxD subfamily. In terms of assembly, homotrimer.

It catalyses the reaction a UDP-3-O-[(3R)-3-hydroxyacyl]-alpha-D-glucosamine + a (3R)-hydroxyacyl-[ACP] = a UDP-2-N,3-O-bis[(3R)-3-hydroxyacyl]-alpha-D-glucosamine + holo-[ACP] + H(+). Its pathway is bacterial outer membrane biogenesis; LPS lipid A biosynthesis. Catalyzes the N-acylation of UDP-3-O-acylglucosamine using 3-hydroxyacyl-ACP as the acyl donor. Is involved in the biosynthesis of lipid A, a phosphorylated glycolipid that anchors the lipopolysaccharide to the outer membrane of the cell. The polypeptide is UDP-3-O-acylglucosamine N-acyltransferase (Polynucleobacter asymbioticus (strain DSM 18221 / CIP 109841 / QLW-P1DMWA-1) (Polynucleobacter necessarius subsp. asymbioticus)).